The following is an 856-amino-acid chain: Protein translocase subunit SecA (856 aa).

Residues Q77, 95–99 (GEGKT), and D534 each bind ATP.

Belongs to the SecA family. In terms of assembly, monomer and homodimer. Part of the essential Sec protein translocation apparatus which comprises SecA, SecYEG and auxiliary proteins SecDF. Other proteins may also be involved.

It localises to the cell inner membrane. The protein localises to the cytoplasm. It carries out the reaction ATP + H2O + cellular proteinSide 1 = ADP + phosphate + cellular proteinSide 2.. In terms of biological role, part of the Sec protein translocase complex. Interacts with the SecYEG preprotein conducting channel. Has a central role in coupling the hydrolysis of ATP to the transfer of proteins into and across the cell membrane, serving as an ATP-driven molecular motor driving the stepwise translocation of polypeptide chains across the membrane. The chain is Protein translocase subunit SecA from Thermosipho africanus (strain TCF52B).